The following is a 313-amino-acid chain: R2-like ligand binding oxidase (313 aa).

Residues Glu68, Glu101, and His104 each coordinate Mn(2+). Residues 71–162 (VTQDIQPFMS…AAQVRASVTY (92 aa)) constitute a cross-link (3-(O4'-tyrosyl)-valine (Val-Tyr)). Fe cation is bound at residue Glu101. Fe cation is bound by residues Glu167, Glu202, and His205.

Belongs to the ribonucleoside diphosphate reductase small chain family. R2-like ligand binding oxidase subfamily. As to quaternary structure, homodimer. The cofactor is Fe cation. Requires Mn(2+) as cofactor.

In terms of biological role, probable oxidase that might be involved in lipid metabolism. The sequence is that of R2-like ligand binding oxidase from Mycobacteroides abscessus (strain ATCC 19977 / DSM 44196 / CCUG 20993 / CIP 104536 / JCM 13569 / NCTC 13031 / TMC 1543 / L948) (Mycobacterium abscessus).